The sequence spans 282 residues: MAKKRAGNRETESSPLVEQEPRPSKETPVPKGAQSPGGASARMSILLLVVIFACSACVMYLVFRNFPQLSEDEREKIKIPKDMEDAKALGTVLSKYKDTYYTQVLLAYFATYIFLQTFAIPGSIFLSILSGYLYPFPLALFLVCLCSGLGASFCYMLSYLVGRPMVYKYLTERAQKWSQQVDKHREHLINYIIFLRITPFLPNWFINITSPVINVPLGVFFLGTFLGVAPPSFVAINAGTTLYKLTTAGEAVSWNSLLVLGVLAVVSILPVCFQKKLQQKLE.

The interval 1-36 (MAKKRAGNRETESSPLVEQEPRPSKETPVPKGAQSP) is disordered. A run of 6 helical transmembrane segments spans residues 43–63 (MSIL…YLVF), 102–122 (TQVL…AIPG), 138–160 (LALF…LSYL), 188–208 (LINY…FINI), 216–236 (PLGV…FVAI), and 251–271 (AVSW…ILPV). Residues 131–242 (GYLYPFPLAL…FVAINAGTTL (112 aa)) are VTT domain; required for its function in autophagy.

Belongs to the TMEM41 family.

The protein resides in the endoplasmic reticulum membrane. It localises to the endomembrane system. It carries out the reaction a 1,2-diacyl-sn-glycero-3-phospho-L-serine(in) = a 1,2-diacyl-sn-glycero-3-phospho-L-serine(out). The enzyme catalyses cholesterol(in) = cholesterol(out). The catalysed reaction is a 1,2-diacyl-sn-glycero-3-phosphocholine(in) = a 1,2-diacyl-sn-glycero-3-phosphocholine(out). It catalyses the reaction a 1,2-diacyl-sn-glycero-3-phosphoethanolamine(in) = a 1,2-diacyl-sn-glycero-3-phosphoethanolamine(out). In terms of biological role, phospholipid scramblase involved in lipid homeostasis and membrane dynamics processes. Has phospholipid scramblase activity toward cholesterol and phosphatidylserine, as well as phosphatidylethanolamine and phosphatidylcholine. Required for autophagosome formation: participates in early stages of autophagosome biogenesis at the endoplasmic reticulum (ER) membrane by reequilibrating the leaflets of the ER as lipids are extracted by atg2 (atg2a or atg2b) to mediate autophagosome assembly. In addition to autophagy, involved in other processes in which phospholipid scramblase activity is required. Required for normal motor neuron development. This Danio rerio (Zebrafish) protein is Transmembrane protein 41B.